Reading from the N-terminus, the 454-residue chain is Glutamyl-tRNA reductase (454 aa).

Substrate is bound by residues 49–52, Ser-109, 114–116, and Gln-120; these read TCNR and ETQ. The active-site Nucleophile is Cys-50. NADP(+) is bound at residue 189–194; it reads GAGKMS. The tract at residues 434-454 is disordered; sequence NDKNKQTSSSREQVLVSRFPD.

Belongs to the glutamyl-tRNA reductase family. In terms of assembly, homodimer.

The catalysed reaction is (S)-4-amino-5-oxopentanoate + tRNA(Glu) + NADP(+) = L-glutamyl-tRNA(Glu) + NADPH + H(+). It participates in porphyrin-containing compound metabolism; protoporphyrin-IX biosynthesis; 5-aminolevulinate from L-glutamyl-tRNA(Glu): step 1/2. Functionally, catalyzes the NADPH-dependent reduction of glutamyl-tRNA(Glu) to glutamate 1-semialdehyde (GSA). The chain is Glutamyl-tRNA reductase from Brevibacillus brevis (strain 47 / JCM 6285 / NBRC 100599).